The following is a 1984-amino-acid chain: Sodium channel protein type 9 subunit alpha (1984 aa).

Residues 1-125 (MAMLPPPGPQ…RRISIKILVH (125 aa)) lie on the Cytoplasmic side of the membrane. Positions 26 to 39 (RISEEKAKEHKDEK) are enriched in basic and acidic residues. Positions 26-55 (RISEEKAKEHKDEKKDDEEEGPKPSSDLEA) are disordered. One copy of the I repeat lies at 112-410 (FSPLRRISIK…VAMAYEEQNQ (299 aa)). A helical transmembrane segment spans residues 126 to 145 (SLFSMLIMCTILTNCIFMTL). Residues 146–150 (SNPPE) lie on the Extracellular side of the membrane. Residues 151-172 (WTKNVEYTFTGIYTFESLIKIL) form a helical membrane-spanning segment. The Cytoplasmic portion of the chain corresponds to 173-185 (ARGFCVGEFTFLR). Residues 186-204 (DPWNWLDFVVIVFAYLTEF) traverse the membrane as a helical segment. At 205–210 (VNLGNV) the chain is on the extracellular side. The N-linked (GlcNAc...) asparagine glycan is linked to N209. A helical membrane pass occupies residues 211 to 227 (SALRTFRVLRALKTISV). The Cytoplasmic portion of the chain corresponds to 228 to 241 (IPGLKTIVGALIQS). A helical membrane pass occupies residues 242–267 (VKKLSDVMILTVFCLSVFALIGLQLF). Topologically, residues 268–346 (MGNLKHKCFR…PDYGYTSFDT (79 aa)) are extracellular. A disulfide bridge connects residues C275 and C324. An N-linked (GlcNAc...) asparagine glycan is attached at N283. The pore-forming intramembrane region spans 347–363 (FSWAFLALFRLMTQDYW). Residues 364 to 376 (ENLYQQTLRAAGK) are Extracellular-facing. Residues 377 to 402 (TYMIFFVVVIFLGSFYLINLILAVVA) form a helical membrane-spanning segment. Topologically, residues 403–744 (MAYEEQNQAN…LIYFIVMDPF (342 aa)) are cytoplasmic. The segment covering 461–471 (SSSETSRLSSK) has biased composition (low complexity). Disordered stretches follow at residues 461 to 542 (SSSE…RGSL) and 576 to 609 (IFGDNESRRGSLFVPHRPRERRSSNISQASRSPP). Residues 474 to 486 (KERRNRRKKKKQK) show a composition bias toward basic residues. Basic and acidic residues predominate over residues 489 to 509 (SGEEKGDDEKLSKSGSEESIR). The stretch at 725–988 (CSPYWIKFKK…EEDTDANNLQ (264 aa)) is one II repeat. Residues 745–761 (VDLAITICIVLNTLFMA) form a helical membrane-spanning segment. Residues 762 to 770 (MEHHPMTEE) lie on the Extracellular side of the membrane. A helical transmembrane segment spans residues 771 to 795 (FKNVLAVGNLIFTGIFAAEMVLKLI). Residues 796–804 (AMDPYEYFQ) are Cytoplasmic-facing. A helical membrane pass occupies residues 805–821 (VGWNIFDSLIVTLSLIE). Over 822 to 830 (LFLADVEGL) the chain is Extracellular. A helical transmembrane segment spans residues 831–847 (SVLRSFRLLRVFKLAKS). Residues 848 to 864 (WPTLNMLIKIIGNSVGA) lie on the Cytoplasmic side of the membrane. The chain crosses the membrane as a helical span at residues 865 to 887 (LGNLTLVLAIIVFIFAVVGMQLF). Topologically, residues 888–914 (GKSYKECVCKINVDCKLPRWHMNDFFH) are extracellular. C896 and C902 are oxidised to a cystine. Positions 915–927 (SFLIVFRVLCGEW) form an intramembrane region, pore-forming. Residues 928–939 (IETMWDCMEVAG) lie on the Extracellular side of the membrane. An intrachain disulfide couples C934 to C943. The chain crosses the membrane as a helical span at residues 940–966 (QTMCLIVYMMVMVIGNLVVLNLFLALL). At 967 to 1185 (LSSFSSDNLT…WWTIRKTCYR (219 aa)) the chain is on the cytoplasmic side. Disordered regions lie at residues 1015-1040 (KKPKGSKDTKRTADPNNKKENYISNR) and 1103-1145 (EELS…EPVN). A compositionally biased stretch (basic and acidic residues) spans 1019 to 1035 (GSKDTKRTADPNNKKEN). Over residues 1135–1145 (GEEEAEAEPVN) the composition is skewed to acidic residues. An III repeat occupies 1178–1486 (TIRKTCYRIV…KKYYNAMKKL (309 aa)). The chain crosses the membrane as a helical span at residues 1186–1210 (IVEHSWFESFIVLMILLSSGALAFE). The Extracellular segment spans residues 1211–1222 (DIYIEKKKTIKI). The chain crosses the membrane as a helical span at residues 1223-1248 (ILEYADKIFTYIFILEMLLKWVAYGY). Residues 1249-1250 (KT) are Cytoplasmic-facing. Residues 1251–1276 (YFTNAWCWLDFLIVDVSLVTLVANTL) form a helical membrane-spanning segment. Over 1277-1285 (GYSDLGPIK) the chain is Extracellular. Residues 1286 to 1302 (SLRTLRALRPLRALSRF) form a helical membrane-spanning segment. Over 1303–1315 (EGMRVVVNALIGA) the chain is Cytoplasmic. A helical membrane pass occupies residues 1316–1340 (IPSIMNVLLVCLIFWLIFSIMGVNL). Topologically, residues 1341 to 1392 (FAGKFYECVNTTDGSRFPTSQVANRSECFALMNVSGNVRWKNLKVNFDNVGL) are extracellular. C1348 and C1368 are oxidised to a cystine. N-linked (GlcNAc...) asparagine glycans are attached at residues N1350, N1364, and N1373. An intramembrane region (pore-forming) is located at residues 1393–1403 (GYLSLLQVATF). The Extracellular segment spans residues 1404 to 1429 (KGWMDIMYAAVDSVNVNEQPKYEYSL). The chain crosses the membrane as a helical span at residues 1430-1455 (YMYIYFVIFIIFGSFFTLNLFIGVII). The Cytoplasmic segment spans residues 1456 to 1512 (DNFNQQKKKLGGQDIFMTEEQKKYYNAMKKLGSKKPQKPIPRPGNKFQGCIFDLVTN). S1488 is modified (phosphoserine; by PKC). Residues 1495-1793 (IPRPGNKFQG…WEKFDPDATQ (299 aa)) form an IV repeat. The helical transmembrane segment at 1513-1532 (QAFDITIMVLICLNMVTMMV) threads the bilayer. The Extracellular portion of the chain corresponds to 1533–1543 (EKEGQTEYMDY). The chain crosses the membrane as a helical span at residues 1544 to 1565 (VLHWINMVFIILFTGECVLKLI). At 1566-1574 (SLRHYYFTV) the chain is on the cytoplasmic side. A helical transmembrane segment spans residues 1575 to 1596 (GWNIFDFVVVILSIVGMFLAEM). The Extracellular segment spans residues 1597-1605 (IEKYFVSPT). A helical transmembrane segment spans residues 1606-1625 (LFRVIRLARIGRILRLIKGA). The Cytoplasmic segment spans residues 1626–1638 (KGIRTLLFALMMS). A helical transmembrane segment spans residues 1639-1661 (LPALFNIGLLLFLVMFIYAIFGM). Over 1662–1684 (SNFAYVKKEAGINDMFNFETFGN) the chain is Extracellular. An intramembrane region (pore-forming) is located at residues 1685–1697 (SMICLFQITTSAG). Residues 1698 to 1731 (WDGLLAPILNSAPPDCDPKKVHPGSSVEGDCGNP) lie on the Extracellular side of the membrane. The cysteines at positions 1713 and 1728 are disulfide-linked. A helical transmembrane segment spans residues 1732–1757 (SVGIFYFVSYIIISFLVVVNMYIAVI). The Cytoplasmic segment spans residues 1758-1984 (LENFSVATEE…EDKEKDESRK (227 aa)). Residues 1887 to 1916 (EEVSATIIQRAYRRYRLRQHVKNISSIYIK) form the IQ domain. Residues 1916–1930 (KDGDRDDDLPNKEDT) show a composition bias toward basic and acidic residues. The disordered stretch occupies residues 1916-1984 (KDGDRDDDLP…EDKEKDESRK (69 aa)). Positions 1946 to 1958 (VTASTISPPSYDS) are enriched in polar residues. The span at 1960 to 1984 (TKPDQEKYETDKTEKEDKEKDESRK) shows a compositional bias: basic and acidic residues.

It belongs to the sodium channel (TC 1.A.1.10) family. Nav1.7/SCN9A subfamily. The Nav1.7 voltage-gated sodium channel consists of an ion-conducting alpha subunit SCN9A which is functional on its own regulated by one or more beta-1 (SCN1B), beta-2 (SCN2B), beta-3 (SCN3B) and beta-4 (SCN4B) subunits. SCN1B and SCN3B are non-covalently associated with SCN9A. SCN2B and SCN4B are disulfide-linked to SCN9A. SCN1B regulates channel inactivation. Interacts with NEDD4 and NEDD4L; regulates Nav1.7 activity most probably through ubiquitination and subsequent endocytosis. Interacts with TMEM233; modulates the gating properties of NaV1.7. Phosphorylation at Ser-1488 by PKC in a highly conserved cytoplasmic loop increases peak sodium currents. In terms of processing, ubiquitinated by NEDD4L; which may promote its endocytosis. Does not seem to be ubiquitinated by NEDD4. Post-translationally, ubiquitinated by NEDD4L; which may promote its endocytosis. As to expression, expressed at high level in the dorsal root ganglion and at much lower levels in the brain, sciatic nerve, nodose ganglia, heart, thyroid and adrenal glands and Schwann cells, but not in the cardiac and skeletal muscles, brain and liver.

The protein localises to the cell membrane. It is found in the cell projection. It localises to the neuron projection. Its subcellular location is the axon. The catalysed reaction is Na(+)(in) = Na(+)(out). With respect to regulation, inhibited by the conotoxin GVIIJ. In terms of biological role, pore-forming subunit of Nav1.7, a voltage-gated sodium (Nav) channel that directly mediates the depolarizing phase of action potentials in excitable membranes. Navs, also called VGSCs (voltage-gated sodium channels) or VDSCs (voltage-dependent sodium channels), operate by switching between closed and open conformations depending on the voltage difference across the membrane. In the open conformation they allow Na(+) ions to selectively pass through the pore, along their electrochemical gradient. The influx of Na(+) ions provokes membrane depolarization, initiating the propagation of electrical signals throughout cells and tissues. Nav1.7 plays a crucial role in controlling the excitability and action potential propagation from nociceptor neurons, thereby contributing to the sensory perception of pain. This is Sodium channel protein type 9 subunit alpha from Rattus norvegicus (Rat).